A 205-amino-acid polypeptide reads, in one-letter code: Probable GTP-binding protein EngB (205 aa).

The region spanning 27-201 (TGIEIAFAGR…AAKLDFWFSP (175 aa)) is the EngB-type G domain. GTP-binding positions include 35-42 (GRSNAGKS), 62-66 (GRTQL), 80-83 (DLPG), 147-150 (TKAD), and 180-182 (FSA). S42 and T64 together coordinate Mg(2+).

This sequence belongs to the TRAFAC class TrmE-Era-EngA-EngB-Septin-like GTPase superfamily. EngB GTPase family. Mg(2+) serves as cofactor.

Necessary for normal cell division and for the maintenance of normal septation. This is Probable GTP-binding protein EngB from Haemophilus influenzae (strain PittEE).